Here is a 927-residue protein sequence, read N- to C-terminus: Ribosome-releasing factor 2, mitochondrial (927 aa).

The transit peptide at 1 to 57 (MVTAPLLGWVAVRPIPRLSKLNTCKYVSSSLQSYKRSVGSCLGKQQSRDFSYSATLT) directs the protein to the mitochondrion. The 316-residue stretch at 64–379 (EKTRNIGIIA…AVNNLLPGPS (316 aa)) folds into the tr-type G domain. Residues 73–80 (AHIDAGKT), 163–167 (DTPGH), and 217–220 (NKLD) each bind GTP.

The protein belongs to the TRAFAC class translation factor GTPase superfamily. Classic translation factor GTPase family. EF-G/EF-2 subfamily.

The protein localises to the mitochondrion. Functionally, mitochondrial GTPase that mediates the disassembly of ribosomes from messenger RNA at the termination of mitochondrial protein biosynthesis. Not involved in the GTP-dependent ribosomal translocation step during translation elongation. In Talaromyces marneffei (strain ATCC 18224 / CBS 334.59 / QM 7333) (Penicillium marneffei), this protein is Ribosome-releasing factor 2, mitochondrial (mef2).